The following is a 657-amino-acid chain: Serine/threonine kinase NLK (657 aa).

Residues Ser-208–Leu-554 enclose the Protein kinase domain. Residues Ile-214–Val-222 and Lys-237 contribute to the ATP site. Catalysis depends on Asp-391, which acts as the Proton acceptor.

Belongs to the protein kinase superfamily. Ser/Thr protein kinase family. Component of the beta-catenin-lit-1 complex (also called the lit-1/wrm-1 complex or the wrm-1/lit-1 kinase complex) at least composed of lit-1 and wrm-1. Interacts with wrm-1 (via N-terminus); the interaction is direct and activates lit-1 kinase activity which leads to the phosphorylation of pop-1. This promotes pop-1 interaction with par-5 and translocation of pop-1 from the nucleus to the cytoplasm. Interacts with pop-1 (when phosphorylated on 'Ser-125'); the interaction is dependent on the beta-catenin-lit-1 complex. Requires Mg(2+) as cofactor.

The protein resides in the cytoplasm. It is found in the cell cortex. Its subcellular location is the nucleus. It catalyses the reaction L-seryl-[protein] + ATP = O-phospho-L-seryl-[protein] + ADP + H(+). The catalysed reaction is L-threonyl-[protein] + ATP = O-phospho-L-threonyl-[protein] + ADP + H(+). Functionally, has a role in the Wnt signaling pathway controlling the asymmetry of cell divisions during embryogenesis. Operates in the AB and EMS cell lineages influencing cell specification. Required for body wall muscle development, endoderm development, pop-1 asymmetry and T-cell division asymmetry. Component of the beta-catenin-lit-1 complex which promotes the phosphorylation, down-regulation and subcellular relocation of pop-1. Regulates plp-1 nuclear localization in embryos. Plays a role in male tail tip morphogenesis. This Caenorhabditis briggsae protein is Serine/threonine kinase NLK.